The following is a 325-amino-acid chain: Acetyl-coenzyme A carboxylase carboxyl transferase subunit alpha (325 aa).

Positions 44–298 (QLEARADQLR…KAAIQDNLQA (255 aa)) constitute a CoA carboxyltransferase C-terminal domain.

It belongs to the AccA family. In terms of assembly, acetyl-CoA carboxylase is a heterohexamer composed of biotin carboxyl carrier protein (AccB), biotin carboxylase (AccC) and two subunits each of ACCase subunit alpha (AccA) and ACCase subunit beta (AccD).

The protein resides in the cytoplasm. The catalysed reaction is N(6)-carboxybiotinyl-L-lysyl-[protein] + acetyl-CoA = N(6)-biotinyl-L-lysyl-[protein] + malonyl-CoA. The protein operates within lipid metabolism; malonyl-CoA biosynthesis; malonyl-CoA from acetyl-CoA: step 1/1. Functionally, component of the acetyl coenzyme A carboxylase (ACC) complex. First, biotin carboxylase catalyzes the carboxylation of biotin on its carrier protein (BCCP) and then the CO(2) group is transferred by the carboxyltransferase to acetyl-CoA to form malonyl-CoA. The chain is Acetyl-coenzyme A carboxylase carboxyl transferase subunit alpha from Picosynechococcus sp. (strain ATCC 27264 / PCC 7002 / PR-6) (Agmenellum quadruplicatum).